Consider the following 241-residue polypeptide: Centromere protein H (241 aa).

Methionine 1 carries the post-translational modification N-acetylmethionine. The interval 1–24 is disordered; the sequence is MEEQPRERSEAGAEACEEKRGLSQ. Positions 28 to 186 form a coiled coil; the sequence is ERIEDRISLL…KEDVDKMENS (159 aa). A Glycyl lysine isopeptide (Lys-Gly) (interchain with G-Cter in SUMO2) cross-link involves residue lysine 61. The residue at position 62 (threonine 62) is a Phosphothreonine.

This sequence belongs to the CENP-H/MCM16 family. Self-associates. Component of the CENPA-NAC complex, at least composed of CENPA, CENPC, CENPH, CENPM, CENPN, CENPT and CENPU. The CENPA-NAC complex interacts with the CENPA-CAD complex, composed of CENPI, CENPK, CENPL, CENPO, CENPP, CENPQ, CENPR and CENPS. Interacts directly with CENPK. Interacts with KIF2C and NDC80. Interacts with TRIM36. In terms of tissue distribution, abundantly expressed in thymus, spleen, uterus, ovary, testis and muscle, and weakly expressed in small intestine, lung and stomach. Barely detectable expression in kidney, liver, skin and prostate gland. Not detected in brain, heart or adrenal gland. Also expressed weakly in various hematopoietic cell lines.

The protein localises to the nucleus. Its subcellular location is the chromosome. It is found in the centromere. The protein resides in the kinetochore. In terms of biological role, component of the CENPA-NAC (nucleosome-associated) complex, a complex that plays a central role in assembly of kinetochore proteins, mitotic progression and chromosome segregation. The CENPA-NAC complex recruits the CENPA-CAD (nucleosome distal) complex and may be involved in incorporation of newly synthesized CENPA into centromeres. Required for chromosome congression and efficiently align the chromosomes on a metaphase plate. This Mus musculus (Mouse) protein is Centromere protein H.